Here is a 508-residue protein sequence, read N- to C-terminus: ATP synthase subunit alpha (508 aa).

Residue 171–178 (GDRQTGKT) coordinates ATP.

This sequence belongs to the ATPase alpha/beta chains family. In terms of assembly, F-type ATPases have 2 components, CF(1) - the catalytic core - and CF(0) - the membrane proton channel. CF(1) has five subunits: alpha(3), beta(3), gamma(1), delta(1), epsilon(1). CF(0) has three main subunits: a(1), b(2) and c(9-12). The alpha and beta chains form an alternating ring which encloses part of the gamma chain. CF(1) is attached to CF(0) by a central stalk formed by the gamma and epsilon chains, while a peripheral stalk is formed by the delta and b chains.

The protein localises to the cell membrane. The catalysed reaction is ATP + H2O + 4 H(+)(in) = ADP + phosphate + 5 H(+)(out). Its function is as follows. Produces ATP from ADP in the presence of a proton gradient across the membrane. The alpha chain is a regulatory subunit. The chain is ATP synthase subunit alpha from Protochlamydia amoebophila (strain UWE25).